The primary structure comprises 446 residues: NADH-quinone oxidoreductase subunit D (446 aa).

The protein belongs to the complex I 49 kDa subunit family. NDH-1 is composed of 14 different subunits. Subunits NuoB, C, D, E, F, and G constitute the peripheral sector of the complex.

It localises to the cell membrane. It carries out the reaction a quinone + NADH + 5 H(+)(in) = a quinol + NAD(+) + 4 H(+)(out). NDH-1 shuttles electrons from NADH, via FMN and iron-sulfur (Fe-S) centers, to quinones in the respiratory chain. The immediate electron acceptor for the enzyme in this species is believed to be a menaquinone. Couples the redox reaction to proton translocation (for every two electrons transferred, four hydrogen ions are translocated across the cytoplasmic membrane), and thus conserves the redox energy in a proton gradient. The chain is NADH-quinone oxidoreductase subunit D from Mycobacterium sp. (strain JLS).